Here is a 967-residue protein sequence, read N- to C-terminus: Protein moonraker (967 aa).

The disordered stretch occupies residues 178–201 (SHPGQSDLTVPNSPPTHDPGLQPH). Positions 179 to 188 (HPGQSDLTVP) are enriched in polar residues. Serine 287 and serine 409 each carry phosphoserine. Disordered stretches follow at residues 401-431 (ALERWPSTSPKGERRPLTAKDTFPQETSRPS) and 490-601 (KAGK…SHLT). Positions 525–543 (QSQPHSKSRVQQTTVSSRL) are enriched in polar residues. The segment covering 557-568 (WIPPNPTSPPAS) has biased composition (pro residues). Residues 616–642 (AETSKRLKELEELKAKEIDSMQKQRLD) adopt a coiled-coil conformation. Phosphoserine is present on residues serine 700 and serine 826. The tract at residues 849 to 872 (RPCNGNSLDESVGTEEGSEKREAP) is disordered. Residues 885–967 (GRAPLFVPPG…FTSEFLEAAT (83 aa)) are necessary and sufficient for CEP20-binding.

As to quaternary structure, interacts with CEP63. Interacts with WDR62. Forms a complex with OFD1 and CEP20/FOR20. Interacts with PCM1.

The protein resides in the cytoplasm. The protein localises to the cytoskeleton. It localises to the microtubule organizing center. Its subcellular location is the centrosome. It is found in the centriole. The protein resides in the centriolar satellite. Functionally, involved in centriole duplication. Positively regulates CEP63 centrosomal localization. Required for WDR62 centrosomal localization and promotes the centrosomal localization of CDK2. May play a role in cilium assembly. In Homo sapiens (Human), this protein is Protein moonraker (KIAA0753).